The chain runs to 256 residues: 3-methyl-2-oxobutanoate hydroxymethyltransferase (256 aa).

Mg(2+) contacts are provided by D42 and D86. Residues D42–S43, D86, and K116 contribute to the 3-methyl-2-oxobutanoate site. Mg(2+) is bound at residue E118. The active-site Proton acceptor is E185.

This sequence belongs to the PanB family. In terms of assembly, homodecamer; pentamer of dimers. It depends on Mg(2+) as a cofactor.

The protein resides in the cytoplasm. It catalyses the reaction 3-methyl-2-oxobutanoate + (6R)-5,10-methylene-5,6,7,8-tetrahydrofolate + H2O = 2-dehydropantoate + (6S)-5,6,7,8-tetrahydrofolate. It functions in the pathway cofactor biosynthesis; (R)-pantothenate biosynthesis; (R)-pantoate from 3-methyl-2-oxobutanoate: step 1/2. Catalyzes the reversible reaction in which hydroxymethyl group from 5,10-methylenetetrahydrofolate is transferred onto alpha-ketoisovalerate to form ketopantoate. This Prochlorococcus marinus (strain SARG / CCMP1375 / SS120) protein is 3-methyl-2-oxobutanoate hydroxymethyltransferase.